The primary structure comprises 369 residues: Aminomethyltransferase (369 aa).

It belongs to the GcvT family. As to quaternary structure, the glycine cleavage system is composed of four proteins: P, T, L and H.

The enzyme catalyses N(6)-[(R)-S(8)-aminomethyldihydrolipoyl]-L-lysyl-[protein] + (6S)-5,6,7,8-tetrahydrofolate = N(6)-[(R)-dihydrolipoyl]-L-lysyl-[protein] + (6R)-5,10-methylene-5,6,7,8-tetrahydrofolate + NH4(+). Its function is as follows. The glycine cleavage system catalyzes the degradation of glycine. The protein is Aminomethyltransferase of Xanthomonas oryzae pv. oryzae (strain MAFF 311018).